Consider the following 241-residue polypeptide: DNA repair protein RecO (241 aa).

It belongs to the RecO family.

Functionally, involved in DNA repair and RecF pathway recombination. This chain is DNA repair protein RecO, found in Xanthomonas campestris pv. campestris (strain B100).